The sequence spans 336 residues: MNDLDLNLVPPTAGSAYWRCVESKVESERLFYSRFILSPLKVGQANTIGLVMRRALLGEIKGTCITCAKFENITHEYSTMDGIQESVHDILINSKEIVLKSKSSEAQKAFISIVGPRRVTAQDIELPTSVEVIDPMQHIATITKKVKLNIELKIEKDSGYRRQNIVEYKDGNFTVDAVFTPIRSVNYSIHCFESHDKSIMKEMLLYEIWSNGSITPEEAIYEASRSSINLFLPFLQAEKEKEDFKGEDIHESNALHPSVSIVVDQMAKKVTFQHIFIEQLELSPKAYNFLKKINVHTISDLLDYSQDDLMKMKNFGKKSVEQILEALQKRFGMRLQ.

Positions 1-238 (MNDLDLNLVP…NLFLPFLQAE (238 aa)) are alpha N-terminal domain (alpha-NTD). The alpha C-terminal domain (alpha-CTD) stretch occupies residues 267-336 (AKKVTFQHIF…LQKRFGMRLQ (70 aa)).

This sequence belongs to the RNA polymerase alpha chain family. In plastids the minimal PEP RNA polymerase catalytic core is composed of four subunits: alpha, beta, beta', and beta''. When a (nuclear-encoded) sigma factor is associated with the core the holoenzyme is formed, which can initiate transcription.

Its subcellular location is the plastid. It localises to the chloroplast. The catalysed reaction is RNA(n) + a ribonucleoside 5'-triphosphate = RNA(n+1) + diphosphate. In terms of biological role, DNA-dependent RNA polymerase catalyzes the transcription of DNA into RNA using the four ribonucleoside triphosphates as substrates. The protein is DNA-directed RNA polymerase subunit alpha of Huperzia lucidula (Shining clubmoss).